The following is an 838-amino-acid chain: Lymphoid-specific helicase (838 aa).

Positions 30 to 115 (MLEEEEQLEA…SLKVKKGKNS (86 aa)) form a coiled coil. The span at 94-108 (QKKKEKLERKKESLK) shows a compositional bias: basic and acidic residues. A disordered region spans residues 94 to 135 (QKKKEKLERKKESLKVKKGKNSIDASEEKPVMRKKRGREDES). Ser-115 is subject to Phosphoserine. The span at 119–134 (SEEKPVMRKKRGREDE) shows a compositional bias: basic and acidic residues. The Helicase ATP-binding domain occupies 235–403 (RMLWENGING…WSLLNFLLPD (169 aa)). Residue 248–255 (DEMGLGKT) coordinates ATP. The short motif at 354-357 (DEGH) is the DEAH box element. Phosphoserine is present on residues Ser-503 and Ser-515. In terms of domain architecture, Helicase C-terminal spans 603 to 767 (ILDRMLPELK…GLNLSKNFLD (165 aa)).

It belongs to the SNF2/RAD54 helicase family. In terms of tissue distribution, highly expressed in proliferative tissues such as adult thymus and testis, and expressed at lower levels in uterus, small intestine, colon, and peripheral blood mononuclear cells. Also expressed in neoplastic cell lines including those derived from myeloid and lymphoid leukemias.

The protein resides in the nucleus. In terms of biological role, plays an essential role in normal development and survival. Involved in regulation of the expansion or survival of lymphoid cells. Required for de novo or maintenance DNA methylation. May control silencing of the imprinted CDKN1C gene through DNA methylation. May play a role in formation and organization of heterochromatin, implying a functional role in the regulation of transcription and mitosis. This chain is Lymphoid-specific helicase, found in Homo sapiens (Human).